The primary structure comprises 463 residues: RuvB-like 2 (463 aa).

Ala2 bears the N-acetylalanine mark. Lys9 participates in a covalent cross-link: Glycyl lysine isopeptide (Lys-Gly) (interchain with G-Cter in SUMO2). 77–84 (GQPGTGKT) contributes to the ATP binding site. At Ser437 the chain carries Phosphoserine. Glycyl lysine isopeptide (Lys-Gly) (interchain with G-Cter in SUMO2) cross-links involve residues Lys444 and Lys456.

It belongs to the RuvB family. In terms of assembly, forms homohexameric rings. Can form a dodecamer with RUVBL1 made of two stacked hexameric rings; however, even though RUVBL1 and RUVBL2 are present in equimolar ratio, the oligomeric status of each hexamer is not known. Oligomerization may regulate binding to nucleic acids and conversely, binding to nucleic acids may affect the dodecameric assembly. Interaction of the complex with DHX34 results in conformational changes of the N-terminus of the RUVBL2 subunits, resulting in loss of nucleotide binding ability and ATP hydrolysis of the complex. Interacts with the transcriptional activation domain of MYC. Interacts with ATF2. Component of the RNA polymerase II holoenzyme complex. May also act to bridge the LEF1/TCF1-CTNNB1 complex and TBP. Component of the NuA4 histone acetyltransferase complex which contains the catalytic subunit KAT5/TIP60 and the subunits EP400, TRRAP/PAF400, BRD8/SMAP, EPC1, DMAP1/DNMAP1, RUVBL1/TIP49, RUVBL2, ING3, actin, ACTL6A/BAF53A, MORF4L1/MRG15, MORF4L2/MRGX, MRGBP, YEATS4/GAS41, VPS72/YL1 and MEAF6. The NuA4 complex interacts with MYC and the adenovirus E1A protein. RUVBL2 interacts with EP400. Component of a NuA4-related complex which contains EP400, TRRAP/PAF400, SRCAP, BRD8/SMAP, EPC1, DMAP1/DNMAP1, RUVBL1/TIP49, RUVBL2, actin, ACTL6A/BAF53A, VPS72 and YEATS4/GAS41. Interacts with NPAT. Component of the chromatin-remodeling INO80 complex; specifically part of a complex module associated with the helicase ATP-binding and the helicase C-terminal domain of INO80. Component of some MLL1/MLL complex, at least composed of the core components KMT2A/MLL1, ASH2L, HCFC1/HCF1, WDR5 and RBBP5, as well as the facultative components BACC1, CHD8, E2F6, HSP70, INO80C, KANSL1, LAS1L, MAX, MCRS1, MGA, MYST1/MOF, PELP1, PHF20, PRP31, RING2, RUVB1/TIP49A, RUVB2/TIP49B, SENP3, TAF1, TAF4, TAF6, TAF7, TAF9 and TEX10. Interacts with IGHMBP2. Interacts with TELO2. Interacts with HINT1. Component of a SWR1-like complex. Component of the R2TP complex composed at least of RUVBL1, RUVBL2, RPAP3 and PIHD1. Component of the PAQosome complex which is responsible for the biogenesis of several protein complexes and which consists of R2TP complex members RUVBL1, RUVBL2, RPAP3 and PIH1D1, URI complex members PFDN2, PFDN6, PDRG1, UXT and URI1 as well as ASDURF, POLR2E and DNAAF10/WDR92. Interacts with ITFG1. Interacts with ZMYND10. Interacts with WAC; WAC positively regulates MTOR activity by promoting the assembly of the TTT complex composed of TELO2, TTI1 and TTI2 and the RUVBL complex composed of RUVBL1 and RUVBL2 into the TTT-RUVBL complex which leads to the dimerization of the mTORC1 complex and its subsequent activation. Forms a complex with APPL1 and APPL2. Interacts with ZNHIT2 (via HIT-type zinc finger) in the presence of ATP or ADP; shows a stronger interaction in the presence of ADP. The RUVBL1/RUVBL2 complex interacts with ZNHIT1 (via HIT-type zinc finger), ZNHIT3 (via HIT-type zinc finger), ZNHIT6 (via HIT-type zinc finger) and DDX59/ZNHIT5 (via HIT-type zinc finger) in the presence of ADP. Interacts with NOPCHAP1; the interaction is direct and disrupted upon ATP binding. Interacts with SMG1.

The protein localises to the nucleus matrix. Its subcellular location is the nucleus. It localises to the nucleoplasm. The protein resides in the cytoplasm. It is found in the membrane. The protein localises to the dynein axonemal particle. It carries out the reaction ATP + H2O = ADP + phosphate + H(+). Possesses single-stranded DNA-stimulated ATPase and ATP-dependent DNA helicase (5' to 3') activity; hexamerization is thought to be critical for ATP hydrolysis and adjacent subunits in the ring-like structure contribute to the ATPase activity. Component of the NuA4 histone acetyltransferase complex which is involved in transcriptional activation of select genes principally by acetylation of nucleosomal histones H4 and H2A. This modification may both alter nucleosome-DNA interactions and promote interaction of the modified histones with other proteins which positively regulate transcription. This complex may be required for the activation of transcriptional programs associated with oncogene and proto-oncogene mediated growth induction, tumor suppressor mediated growth arrest and replicative senescence, apoptosis, and DNA repair. The NuA4 complex ATPase and helicase activities seem to be, at least in part, contributed by the association of RUVBL1 and RUVBL2 with EP400. NuA4 may also play a direct role in DNA repair when recruited to sites of DNA damage. Component of a SWR1-like complex that specifically mediates the removal of histone H2A.Z/H2AZ1 from the nucleosome. Proposed core component of the chromatin remodeling INO80 complex which exhibits DNA- and nucleosome-activated ATPase activity and catalyzes ATP-dependent nucleosome sliding. Plays an essential role in oncogenic transformation by MYC and also modulates transcriptional activation by the LEF1/TCF1-CTNNB1 complex. May also inhibit the transcriptional activity of ATF2. Involved in the endoplasmic reticulum (ER)-associated degradation (ERAD) pathway where it negatively regulates expression of ER stress response genes. May play a role in regulating the composition of the U5 snRNP complex. In Mus musculus (Mouse), this protein is RuvB-like 2 (Ruvbl2).